The sequence spans 275 residues: Shikimate dehydrogenase (NADP(+)) (275 aa).

Shikimate contacts are provided by residues serine 19 to serine 21 and threonine 66. The active-site Proton acceptor is the lysine 70. Glutamate 82 serves as a coordination point for NADP(+). Positions 91 and 106 each coordinate shikimate. Residues glycine 129–alanine 133, asparagine 153–arginine 158, and isoleucine 219 contribute to the NADP(+) site. Tyrosine 221 contacts shikimate. Glycine 242 is a binding site for NADP(+).

Belongs to the shikimate dehydrogenase family. Homodimer.

It carries out the reaction shikimate + NADP(+) = 3-dehydroshikimate + NADPH + H(+). It participates in metabolic intermediate biosynthesis; chorismate biosynthesis; chorismate from D-erythrose 4-phosphate and phosphoenolpyruvate: step 4/7. Its function is as follows. Involved in the biosynthesis of the chorismate, which leads to the biosynthesis of aromatic amino acids. Catalyzes the reversible NADPH linked reduction of 3-dehydroshikimate (DHSA) to yield shikimate (SA). This chain is Shikimate dehydrogenase (NADP(+)), found in Dictyoglomus turgidum (strain DSM 6724 / Z-1310).